A 282-amino-acid polypeptide reads, in one-letter code: tRNA pseudouridine synthase A (282 aa).

The active-site Nucleophile is D51. Residue Y109 coordinates substrate.

Belongs to the tRNA pseudouridine synthase TruA family. In terms of assembly, homodimer.

It catalyses the reaction uridine(38/39/40) in tRNA = pseudouridine(38/39/40) in tRNA. Formation of pseudouridine at positions 38, 39 and 40 in the anticodon stem and loop of transfer RNAs. The protein is tRNA pseudouridine synthase A of Delftia acidovorans (strain DSM 14801 / SPH-1).